A 228-amino-acid polypeptide reads, in one-letter code: Ribose-5-phosphate isomerase A (228 aa).

Residues 27-30, 86-89, and 100-103 contribute to the substrate site; these read TGTT, DGAD, and KGMG. The active-site Proton acceptor is Glu109. Lys127 serves as a coordination point for substrate.

It belongs to the ribose 5-phosphate isomerase family. As to quaternary structure, homodimer.

The catalysed reaction is aldehydo-D-ribose 5-phosphate = D-ribulose 5-phosphate. It functions in the pathway carbohydrate degradation; pentose phosphate pathway; D-ribose 5-phosphate from D-ribulose 5-phosphate (non-oxidative stage): step 1/1. Catalyzes the reversible conversion of ribose-5-phosphate to ribulose 5-phosphate. The polypeptide is Ribose-5-phosphate isomerase A (Borreliella burgdorferi (strain ZS7) (Borrelia burgdorferi)).